A 308-amino-acid chain; its full sequence is Putative mitochondrial transporter UCP3 (308 aa).

The Mitochondrial intermembrane segment spans residues 1-10; it reads MVGLQPSEVP. A helical membrane pass occupies residues 11–32; sequence PTTVVKFLGAGTAACFADLLTF. Solcar repeat units follow at residues 11-102, 111-202, and 211-296; these read PTTV…VKQF, SSVA…IKEK, and DNFP…LKRA. Residues 33-73 lie on the Mitochondrial matrix side of the membrane; sequence PLDTAKVRLQIQGENPGAQSVQYRGVLGTILTMVRTEGPRS. Residues 74 to 96 form a helical membrane-spanning segment; sequence PYSGLVAGLHRQMSFASIRIGLY. Residues 97 to 116 lie on the Mitochondrial intermembrane side of the membrane; sequence DSVKQFYTPKGADHSSVAIR. A helical membrane pass occupies residues 117–133; that stretch reads ILAGCTTGAMAVTCAQP. The Mitochondrial matrix portion of the chain corresponds to 134 to 179; sequence TDVVKVRFQAMIRLGTGGERKYRGTMDAYRTIAREEGVRGLWKGTW. A helical membrane pass occupies residues 180–196; it reads PNITRNAIVNCAEMVTY. Topologically, residues 197–213 are mitochondrial intermembrane; that stretch reads DIIKEKLLESHLFTDNF. The chain crosses the membrane as a helical span at residues 214–233; that stretch reads PCHFVSAFGAGFCATVVASP. Residues 234–267 are Mitochondrial matrix-facing; sequence VDVVKTRYMNAPLGRYRSPLHCMLKMVAQEGPTA. Residues 268–290 form a helical membrane-spanning segment; the sequence is FYKGFVPSFLRLGAWNVMMFVTY. The interval 275–297 is purine nucleotide binding; it reads SFLRLGAWNVMMFVTYEQLKRAL. The Mitochondrial intermembrane portion of the chain corresponds to 291 to 308; sequence EQLKRALMKVQVLRESPF.

The protein belongs to the mitochondrial carrier (TC 2.A.29) family. As to quaternary structure, interacts with HAX1; the interaction is direct and calcium-dependent.

Its subcellular location is the mitochondrion inner membrane. Inhibited by purine nucleotides and inorganic phosphate (in vitro). Functionally, putative transmembrane transporter that plays a role in mitochondrial metabolism via an as yet unclear mechanism. Originally, this mitochondrial protein was thought to act as a proton transmembrane transporter from the mitochondrial intermembrane space into the matrix, causing proton leaks through the inner mitochondrial membrane, thereby uncoupling mitochondrial membrane potential generation from ATP synthesis. However, this function is controversial and uncoupling may not be the function, or at least not the main function, but rather a consequence of more conventional metabolite transporter activity. This chain is Putative mitochondrial transporter UCP3, found in Mus musculus (Mouse).